Reading from the N-terminus, the 1023-residue chain is Probable histidine kinase 3 (1023 aa).

Topologically, residues 1–80 (MDEMSCGGGG…RGWRVVRETW (80 aa)) are cytoplasmic. Residues 81-101 (WWVLLLWILAGSLGSFYLFLF) form a helical membrane-spanning segment. At 102–387 (MNAQSLDKRR…CRFEKKPPWP (286 aa)) the chain is on the extracellular side. The CHASE domain maps to 151 to 352 (TPSAIDQMTF…TNESPISMYG (202 aa)). A helical transmembrane segment spans residues 388–408 (WLAITSSFGTLVIALLTGHIF). At 409-1023 (QATVHRIAKV…RFFQNHDQVE (615 aa)) the chain is on the cytoplasmic side. Residues 445 to 715 (TVSHEIRTPM…TFTFTAVLMR (271 aa)) enclose the Histidine kinase domain. His448 is subject to Phosphohistidine; by autocatalysis. 2 consecutive Response regulatory domains span residues 732–854 (NALV…RRAL) and 880–1016 (QIIV…ARFF). Position 783 is a 4-aspartylphosphate (Asp783). Residues 812 to 831 (LFLLGSSASSPKGGSDTSRE) are disordered. A compositionally biased stretch (polar residues) spans 817–827 (SSASSPKGGSD). Residue Asp930 is modified to 4-aspartylphosphate.

In terms of processing, activation probably requires a transfer of a phosphate group between a His in the transmitter domain and an Asp of the receiver domain. As to expression, highly expressed in young leaves and at lower levels in roots, mature leaves, stems and spikelets.

It localises to the cell membrane. The catalysed reaction is ATP + protein L-histidine = ADP + protein N-phospho-L-histidine.. Functionally, cytokinin receptor related to bacterial two-component regulators. Functions as a histidine kinase and transmits the stress signal to a downstream MAPK cascade. This is Probable histidine kinase 3 from Oryza sativa subsp. japonica (Rice).